The following is a 670-amino-acid chain: Probable leucine-rich repeat receptor-like protein kinase At1g68400 (670 aa).

Positions 1–29 are cleaved as a signal peptide; the sequence is MAKSSFFNKHLLLSLLILLQSCLLSSSSS. Over 30–274 the chain is Extracellular; it reads TDSETLLNFK…KSNNTSRIST (245 aa). Residues Asn-52, Asn-79, Asn-102, Asn-109, and Asn-112 are each glycosylated (N-linked (GlcNAc...) asparagine). LRR repeat units follow at residues 69–91, 92–114, 115–137, 139–162, 163–185, and 186–207; these read RVTR…TSLT, SLRV…SNLT, ALKL…ITSL, RLYR…TDLT, HLLT…NLSD, and LQDF…LSQF. N-linked (GlcNAc...) asparagine glycans are attached at residues Asn-149, Asn-182, and Asn-190. The interval 230-266 is disordered; the sequence is SSDPTKPGRPDEAKASPLNKPETVPSSPTSIHGGDKS. The span at 253-266 shows a compositional bias: polar residues; that stretch reads VPSSPTSIHGGDKS. Asn-268 carries an N-linked (GlcNAc...) asparagine glycan. A helical transmembrane segment spans residues 275–295; it reads ISLIAIILGDFIILSFVSLLL. Residues 296–670 lie on the Cytoplasmic side of the membrane; it reads YYCFWRQYAV…EDTCGGTTSQ (375 aa). Residues 362-636 form the Protein kinase domain; that stretch reads RASAEMLGKG…GHVVKLIEDI (275 aa). Ser-364 carries the phosphoserine modification. Residues 368–376 and Lys-390 contribute to the ATP site; that span reads LGKGGFGTA. At Ser-443 the chain carries Phosphoserine. A Phosphothreonine modification is found at Thr-463. The Proton acceptor role is filled by Asp-491. Phosphothreonine is present on Thr-616.

Belongs to the protein kinase superfamily. Ser/Thr protein kinase family.

The protein localises to the cell membrane. The catalysed reaction is L-seryl-[protein] + ATP = O-phospho-L-seryl-[protein] + ADP + H(+). It catalyses the reaction L-threonyl-[protein] + ATP = O-phospho-L-threonyl-[protein] + ADP + H(+). In Arabidopsis thaliana (Mouse-ear cress), this protein is Probable leucine-rich repeat receptor-like protein kinase At1g68400.